An 857-amino-acid chain; its full sequence is MKNAREIQFSSFLLLAHFCFVGAQSDYAPYFYDNGPNSNNGNMALLNLSEDTPRGTQIYVLNGTDPEGQPVKYGITFEPGSKEFFRVHPKSGVVTLIEDLDREAQDEIEVFVSISDSLNKVVEKVSVFIMDANDERPQFQNMPSIVDVPENTTSGSSIYKVQAVDRDTGSGGSVTYFLQSSEQSPKFAIDHHSGVLRIKPGESLDYEKSRTHFITVVAKDGGGIYKGKQQVMSSSATLTINVIDTQDSPPIFIGTPYFGYVYEVSSPGSEIFTVSAKDGDMDNPNTIIYSLDSGADGSFSINKTSGVITLNLYPADLRREVFNIKVKALEISPEGKRLDFATTTVTIRVVDLNNHPPTFYGENGPQNVFELTMYEHPQEGEFLRGLKITVNDSDQGSNAKFNLRLVGPGRMLRVVPQTVLNEAQVTVLVEDSAAMDFEKSQFLTFKLLAVEIDTPERFSATADIIIHLLDTNDNAPKFTSDFYIARIPENSPGGSNVVSVTAMDPDSGIWGVVKYSIYGSGADIFLIQADSGIIYTQPWASLDAEVKSKYNFYVKAEDPEGKYSLAEVFVTITDLNDHPPAFNENSLEQTMVIGAPVKIEAIDEDAEEPNNLIEYSIMKADPDNIFDINADTGEIKLKPYIKSMDIVQNITNQRDCTWSVVVQAKDRGSPSFSTTTVVKIDITEATPLKGPLTSFFMNSRENPMHFLGLISGVILILVFVTVIISTVIFVRRNKANRILPSRRIIRKKRKPQKQDDFQEPFREEQEIPRADNVNFNNNIKVCSHRTPPSPPNAPVMPPPLPSHCRHGEREWTVPTVSASVASKSKKKSHRCKDNPVNTALVSELKLKLEQKNMANRY.

The signal sequence occupies residues 1-25; it reads MKNAREIQFSSFLLLAHFCFVGAQS. Residues 26 to 709 are Extracellular-facing; sequence DYAPYFYDNG…RENPMHFLGL (684 aa). Cadherin domains lie at 40 to 139, 140 to 252, 253 to 359, 365 to 478, 479 to 582, and 574 to 693; these read NGNM…RPQF, QNMP…PPIF, IGTP…PPTF, PQNV…APKF, TSDF…PPAF, and DLND…GPLT. The helical transmembrane segment at 710 to 730 threads the bilayer; that stretch reads ISGVILILVFVTVIISTVIFV. At 731–857 the chain is on the cytoplasmic side; the sequence is RRNKANRILP…LEQKNMANRY (127 aa). The tract at residues 746-765 is disordered; sequence RKKRKPQKQDDFQEPFREEQ. The segment covering 752 to 765 has biased composition (basic and acidic residues); sequence QKQDDFQEPFREEQ.

Expressed in photoreceptor cells of the outer nuclear layer of the retina and in the pinal gland.

It is found in the membrane. Its function is as follows. Potential calcium-dependent cell-adhesion protein. Plays a role in the organization of retinal cell layers and Muller glia morphology. In Danio rerio (Zebrafish), this protein is Cadherin-related family member 1a.